Reading from the N-terminus, the 254-residue chain is 4-hydroxy-tetrahydrodipicolinate reductase (254 aa).

NAD(+) is bound at residue G7–I12. Position 35 (R35) interacts with NADP(+). Residues G91–T93 and A115–M118 contribute to the NAD(+) site. Catalysis depends on H147, which acts as the Proton donor/acceptor. Residue H148 participates in (S)-2,3,4,5-tetrahydrodipicolinate binding. K151 serves as the catalytic Proton donor. G157–T158 contacts (S)-2,3,4,5-tetrahydrodipicolinate.

The protein belongs to the DapB family.

The protein localises to the cytoplasm. It catalyses the reaction (S)-2,3,4,5-tetrahydrodipicolinate + NAD(+) + H2O = (2S,4S)-4-hydroxy-2,3,4,5-tetrahydrodipicolinate + NADH + H(+). The enzyme catalyses (S)-2,3,4,5-tetrahydrodipicolinate + NADP(+) + H2O = (2S,4S)-4-hydroxy-2,3,4,5-tetrahydrodipicolinate + NADPH + H(+). The protein operates within amino-acid biosynthesis; L-lysine biosynthesis via DAP pathway; (S)-tetrahydrodipicolinate from L-aspartate: step 4/4. Its function is as follows. Catalyzes the conversion of 4-hydroxy-tetrahydrodipicolinate (HTPA) to tetrahydrodipicolinate. The sequence is that of 4-hydroxy-tetrahydrodipicolinate reductase from Helicobacter pylori (strain ATCC 700392 / 26695) (Campylobacter pylori).